The sequence spans 96 residues: Aspartyl/glutamyl-tRNA(Asn/Gln) amidotransferase subunit C (96 aa).

It belongs to the GatC family. As to quaternary structure, heterotrimer of A, B and C subunits.

The catalysed reaction is L-glutamyl-tRNA(Gln) + L-glutamine + ATP + H2O = L-glutaminyl-tRNA(Gln) + L-glutamate + ADP + phosphate + H(+). It carries out the reaction L-aspartyl-tRNA(Asn) + L-glutamine + ATP + H2O = L-asparaginyl-tRNA(Asn) + L-glutamate + ADP + phosphate + 2 H(+). Allows the formation of correctly charged Asn-tRNA(Asn) or Gln-tRNA(Gln) through the transamidation of misacylated Asp-tRNA(Asn) or Glu-tRNA(Gln) in organisms which lack either or both of asparaginyl-tRNA or glutaminyl-tRNA synthetases. The reaction takes place in the presence of glutamine and ATP through an activated phospho-Asp-tRNA(Asn) or phospho-Glu-tRNA(Gln). This Wolinella succinogenes (strain ATCC 29543 / DSM 1740 / CCUG 13145 / JCM 31913 / LMG 7466 / NCTC 11488 / FDC 602W) (Vibrio succinogenes) protein is Aspartyl/glutamyl-tRNA(Asn/Gln) amidotransferase subunit C.